The sequence spans 360 residues: MKSSIVAKLEALQERREEVEVLLGDPGVISDQIRFRALSKEYAQLSDVTRCFQHWWQVQEDIHTAEHLLQDPEMRDMAQEELLASGASLEQLEQQLQVLLLPRDPDDERGCFLEVRAGTGGDEAALFAGDLFRMYSRYAETRRWKVEIVSASYGEHGGFKEVIAKVSHEGAYGLLKFESGGHRVQRVPETESQGRIHTSACTVAVMPEIPEAELPEINAGDLRIDTFRSSGAGGQHVNTTDSAIRITHLPTGLVVECQDERSQHKNKAKALAVLGARLRAAEVQRRQQEESSTRRNLLGSGDRSDRIRTYNFPQGRVTDHRIGLTLYRLDEVIEGKLDMLIQPIMQEYQADQLAALSETP.

Q235 is subject to N5-methylglutamine. The segment covering Q284–T293 has biased composition (basic and acidic residues). Positions Q284–N311 are disordered.

This sequence belongs to the prokaryotic/mitochondrial release factor family. In terms of processing, methylated by PrmC. Methylation increases the termination efficiency of RF1.

The protein resides in the cytoplasm. Its function is as follows. Peptide chain release factor 1 directs the termination of translation in response to the peptide chain termination codons UAG and UAA. This chain is Peptide chain release factor 1, found in Sodalis glossinidius (strain morsitans).